The sequence spans 319 residues: Acetyl-coenzyme A carboxylase carboxyl transferase subunit alpha (319 aa).

Residues 35 to 296 form the CoA carboxyltransferase C-terminal domain; the sequence is NIDEEVHRLR…KAQLLADLAD (262 aa).

This sequence belongs to the AccA family. As to quaternary structure, acetyl-CoA carboxylase is a heterohexamer composed of biotin carboxyl carrier protein (AccB), biotin carboxylase (AccC) and two subunits each of ACCase subunit alpha (AccA) and ACCase subunit beta (AccD).

It localises to the cytoplasm. It carries out the reaction N(6)-carboxybiotinyl-L-lysyl-[protein] + acetyl-CoA = N(6)-biotinyl-L-lysyl-[protein] + malonyl-CoA. Its pathway is lipid metabolism; malonyl-CoA biosynthesis; malonyl-CoA from acetyl-CoA: step 1/1. In terms of biological role, component of the acetyl coenzyme A carboxylase (ACC) complex. First, biotin carboxylase catalyzes the carboxylation of biotin on its carrier protein (BCCP) and then the CO(2) group is transferred by the carboxyltransferase to acetyl-CoA to form malonyl-CoA. In Shigella boydii serotype 4 (strain Sb227), this protein is Acetyl-coenzyme A carboxylase carboxyl transferase subunit alpha.